We begin with the raw amino-acid sequence, 216 residues long: GTP-binding nuclear protein Ran, testis-specific isoform (216 aa).

Alanine 2 is subject to N-acetylalanine. One can recognise a Small GTPase Ran-type domain in the interval 7–171; sequence PQVQFKVVLV…FWLARKLIGD (165 aa). GTP is bound at residue 17-24; it reads GDGGTGKT. Threonine 24 is modified (phosphothreonine). The interval 37-45 is switch-I; the sequence is KEYVATLGV. Lysine 60 is subject to N6-acetyllysine. 65–69 is a binding site for GTP; the sequence is DTAGQ. The tract at residues 68-84 is switch-II; sequence GQEKFGGLRDGYYIQAQ. Lysine 71 carries the post-translational modification N6-acetyllysine; alternate. Residue lysine 71 forms a Glycyl lysine isopeptide (Lys-Gly) (interchain with G-Cter in SUMO2); alternate linkage. Residue lysine 71 forms a Glycyl lysine isopeptide (Lys-Gly) (interchain with G-Cter in ubiquitin); alternate linkage. An N6-acetyllysine modification is found at lysine 99. 122-125 lines the GTP pocket; that stretch reads NKVD. At lysine 134 the chain carries N6-acetyllysine. Position 159 is an N6-acetyllysine; alternate (lysine 159). At lysine 159 the chain carries N6-succinyllysine; alternate.

This sequence belongs to the small GTPase superfamily. Ran family. Testis specific.

Its subcellular location is the nucleus. It catalyses the reaction GTP + H2O = GDP + phosphate + H(+). Its function is as follows. GTP-binding protein involved in nucleocytoplasmic transport. Required for the import of protein into the nucleus and also for RNA export. Involved in chromatin condensation and control of cell cycle. The chain is GTP-binding nuclear protein Ran, testis-specific isoform (Rasl2-9) from Mus musculus (Mouse).